A 194-amino-acid chain; its full sequence is dTTP/UTP pyrophosphatase (194 aa).

Asp-73 functions as the Proton acceptor in the catalytic mechanism.

This sequence belongs to the Maf family. YhdE subfamily. A divalent metal cation serves as cofactor.

It is found in the cytoplasm. The enzyme catalyses dTTP + H2O = dTMP + diphosphate + H(+). The catalysed reaction is UTP + H2O = UMP + diphosphate + H(+). In terms of biological role, nucleoside triphosphate pyrophosphatase that hydrolyzes dTTP and UTP. May have a dual role in cell division arrest and in preventing the incorporation of modified nucleotides into cellular nucleic acids. This Clostridium botulinum (strain ATCC 19397 / Type A) protein is dTTP/UTP pyrophosphatase.